Consider the following 158-residue polypeptide: C-type lectin galactose-binding isoform (158 aa).

The N-terminal stretch at 1–23 (MGRFLLVTLSLLVMAFFLNGANS) is a signal peptide. Intrachain disulfides connect Cys-26-Cys-37, Cys-54-Cys-154, and Cys-129-Cys-146. Residues 33-155 (RNGFCYKVFN…CTALRPFLCQ (123 aa)) enclose the C-type lectin domain. The Ca(2+) site is built by Gln-119, Asp-121, and Glu-127. The Galactose-binding motif lies at 119–121 (QPD). Residue Asn-134 is glycosylated (N-linked (GlcNAc...) asparagine). Residues Asn-142 and Asp-143 each coordinate Ca(2+).

The protein belongs to the true venom lectin family. As to quaternary structure, dimer. Probably disulfide-linked homodimer. Expressed by the venom gland.

It localises to the secreted. Functionally, galactose-binding lectin that binds to and agglutinates erythrocytes in a calcium-dependent manner. This Pseudechis australis (Mulga snake) protein is C-type lectin galactose-binding isoform.